The primary structure comprises 789 residues: Protein translocase subunit SecA (789 aa).

Residues Gln85, 103 to 107 (GEGKT), and Asp492 contribute to the ATP site.

The protein belongs to the SecA family. As to quaternary structure, monomer and homodimer. Part of the essential Sec protein translocation apparatus which comprises SecA, SecYEG and auxiliary proteins SecDF. Other proteins may also be involved.

The protein localises to the cell membrane. The protein resides in the cytoplasm. It catalyses the reaction ATP + H2O + cellular proteinSide 1 = ADP + phosphate + cellular proteinSide 2.. Its function is as follows. Part of the Sec protein translocase complex. Interacts with the SecYEG preprotein conducting channel. Has a central role in coupling the hydrolysis of ATP to the transfer of proteins into and across the cell membrane, serving as an ATP-driven molecular motor driving the stepwise translocation of polypeptide chains across the membrane. This chain is Protein translocase subunit SecA, found in Limosilactobacillus fermentum (strain NBRC 3956 / LMG 18251) (Lactobacillus fermentum).